Reading from the N-terminus, the 62-residue chain is Temporin-1PLa (62 aa).

The first 22 residues, 1–22 (MFTSKKSLLLLFFLGTINLSLC), serve as a signal peptide directing secretion. The propeptide occupies 23–45 (EEERDADEEERRDDPDEMNVEVE). Ile60 carries the post-translational modification Isoleucine amide.

Expressed by the skin glands.

The protein resides in the secreted. Its function is as follows. Antimicrobial activity against the Gram-positive bacterium S.aureus. This Lithobates palustris (Pickerel frog) protein is Temporin-1PLa.